Consider the following 400-residue polypeptide: Subtilisin-like protease 7 (400 aa).

The N-terminal stretch at Met1–Gly20 is a signal peptide. Residues Ala21–Asn119 constitute a propeptide that is removed on maturation. The Inhibitor I9 domain maps to Lys36–Ile118. Residues Ser129–Met400 form the Peptidase S8 domain. Catalysis depends on charge relay system residues Asp161 and His192. Asn222 and Asn252 each carry an N-linked (GlcNAc...) asparagine glycan. The Charge relay system role is filled by Ser346. N-linked (GlcNAc...) asparagine glycosylation occurs at Asn396.

The protein belongs to the peptidase S8 family.

The protein resides in the secreted. Functionally, secreted subtilisin-like serine protease with keratinolytic activity that contributes to pathogenicity. The chain is Subtilisin-like protease 7 (SUB7) from Trichophyton soudanense.